The chain runs to 436 residues: UDP-N-acetylmuramate--L-alanine ligase (436 aa).

ATP is bound at residue Gly110–Ser116.

The protein belongs to the MurCDEF family.

It localises to the cytoplasm. It catalyses the reaction UDP-N-acetyl-alpha-D-muramate + L-alanine + ATP = UDP-N-acetyl-alpha-D-muramoyl-L-alanine + ADP + phosphate + H(+). It participates in cell wall biogenesis; peptidoglycan biosynthesis. In terms of biological role, cell wall formation. The sequence is that of UDP-N-acetylmuramate--L-alanine ligase from Lacticaseibacillus paracasei (strain ATCC 334 / BCRC 17002 / CCUG 31169 / CIP 107868 / KCTC 3260 / NRRL B-441) (Lactobacillus paracasei).